The chain runs to 149 residues: CyanoQ (149 aa).

A signal peptide spans M1–S21. The N-palmitoyl cysteine moiety is linked to residue C22. Residue C22 is the site of S-diacylglycerol cysteine attachment.

Belongs to the PsbQ family. CyanoQ subfamily. In terms of assembly, PSII is composed of 1 copy each of membrane proteins PsbA, PsbB, PsbC, PsbD, PsbE, PsbF, PsbH, PsbI, PsbJ, PsbK, PsbL, PsbM, PsbT, PsbX, PsbY, PsbZ, Psb30/Ycf12, peripheral proteins PsbO, CyanoQ (PsbQ), PsbU, PsbV and a large number of cofactors. It forms dimeric complexes. Pull-down experiments with His-tagged PsbQ pull down dimeric, but not monomeric, PSII. Post-translationally, the N-terminus is blocked. Upon expression in E.coli the N-terminus is modified with a diacylglycerol and an acyl group bound to two palmitates and one palmitoleate.

It localises to the cellular thylakoid membrane. Its function is as follows. One of the extrinsic, lumenal subunits of photosystem II (PSII), which stabilize and protect the oxygen-evolving complex. PSII is a light-driven water plastoquinone oxidoreductase, using light energy to abstract electrons from H(2)O, generating a proton gradient subsequently used for ATP formation. Plays a role in the stability of the oxygen-evolving center on the luminal side of PSII. Required for optimal photoautotrophic growth in the absence of Ca(2+) or Cl(-), functions in optimizing PSII water oxidation/O(2) evolving activity. Requires PsbO to bind to PSII. The sequence is that of CyanoQ from Synechocystis sp. (strain ATCC 27184 / PCC 6803 / Kazusa).